The chain runs to 81 residues: MDPMLASASVIAAALAVGLAAIGPGIGQGNASGQAVSGIARQPEAEGKIRGTLLLTLAFMESLTIYGLVISLVLLFANPFA.

A run of 2 helical transmembrane segments spans residues 6–26 (ASAS…GPGI) and 57–77 (LAFM…LLFA).

It belongs to the ATPase C chain family. In terms of assembly, F-type ATPases have 2 components, F(1) - the catalytic core - and F(0) - the membrane proton channel. F(1) has five subunits: alpha(3), beta(3), gamma(1), delta(1), epsilon(1). F(0) has four main subunits: a(1), b(1), b'(1) and c(10-14). The alpha and beta chains form an alternating ring which encloses part of the gamma chain. F(1) is attached to F(0) by a central stalk formed by the gamma and epsilon chains, while a peripheral stalk is formed by the delta, b and b' chains.

It localises to the cellular thylakoid membrane. In terms of biological role, f(1)F(0) ATP synthase produces ATP from ADP in the presence of a proton or sodium gradient. F-type ATPases consist of two structural domains, F(1) containing the extramembraneous catalytic core and F(0) containing the membrane proton channel, linked together by a central stalk and a peripheral stalk. During catalysis, ATP synthesis in the catalytic domain of F(1) is coupled via a rotary mechanism of the central stalk subunits to proton translocation. Its function is as follows. Key component of the F(0) channel; it plays a direct role in translocation across the membrane. A homomeric c-ring of between 10-14 subunits forms the central stalk rotor element with the F(1) delta and epsilon subunits. This Gloeothece citriformis (strain PCC 7424) (Cyanothece sp. (strain PCC 7424)) protein is ATP synthase subunit c.